We begin with the raw amino-acid sequence, 355 residues long: uncharacterized protein (355 aa).

It localises to the cytoplasm. This is an uncharacterized protein from Saccharomyces cerevisiae (strain ATCC 204508 / S288c) (Baker's yeast).